The primary structure comprises 253 residues: Ubiquinone/menaquinone biosynthesis C-methyltransferase UbiE (253 aa).

S-adenosyl-L-methionine contacts are provided by residues Thr-76, Asp-97, and Asn-125–Ala-126.

Belongs to the class I-like SAM-binding methyltransferase superfamily. MenG/UbiE family.

It catalyses the reaction a 2-demethylmenaquinol + S-adenosyl-L-methionine = a menaquinol + S-adenosyl-L-homocysteine + H(+). It carries out the reaction a 2-methoxy-6-(all-trans-polyprenyl)benzene-1,4-diol + S-adenosyl-L-methionine = a 5-methoxy-2-methyl-3-(all-trans-polyprenyl)benzene-1,4-diol + S-adenosyl-L-homocysteine + H(+). Its pathway is quinol/quinone metabolism; menaquinone biosynthesis; menaquinol from 1,4-dihydroxy-2-naphthoate: step 2/2. It functions in the pathway cofactor biosynthesis; ubiquinone biosynthesis. Methyltransferase required for the conversion of demethylmenaquinol (DMKH2) to menaquinol (MKH2) and the conversion of 2-polyprenyl-6-methoxy-1,4-benzoquinol (DDMQH2) to 2-polyprenyl-3-methyl-6-methoxy-1,4-benzoquinol (DMQH2). This chain is Ubiquinone/menaquinone biosynthesis C-methyltransferase UbiE, found in Bradyrhizobium sp. (strain BTAi1 / ATCC BAA-1182).